The sequence spans 137 residues: Methylglyoxal synthase (137 aa).

One can recognise an MGS-like domain in the interval 1-137 (MNIALVAHDQ…EVRKSKSQRI (137 aa)). Residues H8, K12, 34–37 (TGTT), and 54–55 (SG) each bind substrate. D60 (proton donor/acceptor) is an active-site residue. Substrate is bound at residue H87.

Belongs to the methylglyoxal synthase family.

It catalyses the reaction dihydroxyacetone phosphate = methylglyoxal + phosphate. Catalyzes the formation of methylglyoxal from dihydroxyacetone phosphate. This Clostridioides difficile (strain 630) (Peptoclostridium difficile) protein is Methylglyoxal synthase.